Here is a 537-residue protein sequence, read N- to C-terminus: Glutamyl-tRNA(Gln) amidotransferase subunit B, chloroplastic/mitochondrial (537 aa).

It belongs to the GatB/GatE family. GatB subfamily. As to quaternary structure, subunit of the heterotrimeric GatCAB amidotransferase (AdT) complex, composed of A, B and C subunits.

The protein localises to the mitochondrion. It localises to the plastid. It is found in the chloroplast. It catalyses the reaction L-glutamyl-tRNA(Gln) + L-glutamine + ATP + H2O = L-glutaminyl-tRNA(Gln) + L-glutamate + ADP + phosphate + H(+). Functionally, allows the formation of correctly charged Gln-tRNA(Gln) through the transamidation of misacylated Glu-tRNA(Gln) in chloroplasts and mitochondria. The reaction takes place in the presence of glutamine and ATP through an activated gamma-phospho-Glu-tRNA(Gln). The chain is Glutamyl-tRNA(Gln) amidotransferase subunit B, chloroplastic/mitochondrial from Ostreococcus tauri.